The sequence spans 532 residues: Phosphoenolpyruvate carboxykinase (ATP) (532 aa).

Substrate is bound by residues arginine 58, tyrosine 194, and lysine 200. Residues lysine 200, histidine 220, and 236–244 (GLSGTGKTT) each bind ATP. Residues lysine 200 and histidine 220 each coordinate Mn(2+). Aspartate 257 contributes to the Mn(2+) binding site. ATP contacts are provided by residues glutamate 285, arginine 322, 442-443 (RV), and threonine 448. Arginine 322 contacts substrate.

The protein belongs to the phosphoenolpyruvate carboxykinase (ATP) family. Mn(2+) is required as a cofactor.

It localises to the cytoplasm. It carries out the reaction oxaloacetate + ATP = phosphoenolpyruvate + ADP + CO2. Its pathway is carbohydrate biosynthesis; gluconeogenesis. Functionally, involved in the gluconeogenesis. Catalyzes the conversion of oxaloacetate (OAA) to phosphoenolpyruvate (PEP) through direct phosphoryl transfer between the nucleoside triphosphate and OAA. The polypeptide is Phosphoenolpyruvate carboxykinase (ATP) (Rubrobacter xylanophilus (strain DSM 9941 / JCM 11954 / NBRC 16129 / PRD-1)).